The following is a 101-amino-acid chain: Small ribosomal subunit protein bS6 (101 aa).

This sequence belongs to the bacterial ribosomal protein bS6 family.

Binds together with bS18 to 16S ribosomal RNA. The polypeptide is Small ribosomal subunit protein bS6 (Arthrobacter sp. (strain FB24)).